Here is a 340-residue protein sequence, read N- to C-terminus: UDP-3-O-(3-hydroxymyristoyl)glucosamine N-acyltransferase (340 aa).

His239 serves as the catalytic Proton acceptor.

Belongs to the transferase hexapeptide repeat family. LpxD subfamily. In terms of assembly, homotrimer.

It catalyses the reaction a UDP-3-O-[(3R)-3-hydroxyacyl]-alpha-D-glucosamine + a (3R)-hydroxyacyl-[ACP] = a UDP-2-N,3-O-bis[(3R)-3-hydroxyacyl]-alpha-D-glucosamine + holo-[ACP] + H(+). It carries out the reaction UDP-3-O-[(3R)-3-hydroxytetradecanoyl]-alpha-D-glucosamine + (3R)-hydroxytetradecanoyl-[ACP] = UDP-2-N,3-O-bis[(3R)-3-hydroxytetradecanoyl]-alpha-D-glucosamine + holo-[ACP] + H(+). The protein operates within glycolipid biosynthesis; lipid IV(A) biosynthesis; lipid IV(A) from (3R)-3-hydroxytetradecanoyl-[acyl-carrier-protein] and UDP-N-acetyl-alpha-D-glucosamine: step 3/6. Functionally, catalyzes the N-acylation of UDP-3-O-(hydroxytetradecanoyl)glucosamine using 3-hydroxytetradecanoyl-ACP as the acyl donor. Is involved in the biosynthesis of lipid A, a phosphorylated glycolipid that anchors the lipopolysaccharide to the outer membrane of the cell. The polypeptide is UDP-3-O-(3-hydroxymyristoyl)glucosamine N-acyltransferase (Wigglesworthia glossinidia brevipalpis).